The sequence spans 248 residues: 2,3-bisphosphoglycerate-dependent phosphoglycerate mutase (248 aa).

Substrate is bound by residues 8–15 (RHGESTWN), 21–22 (TG), Arg-60, 87–90 (ERHY), Lys-98, 114–115 (RR), and 183–184 (GN). The active-site Tele-phosphohistidine intermediate is the His-9. The Proton donor/acceptor role is filled by Glu-87.

Belongs to the phosphoglycerate mutase family. BPG-dependent PGAM subfamily. As to quaternary structure, homodimer.

The enzyme catalyses (2R)-2-phosphoglycerate = (2R)-3-phosphoglycerate. Its pathway is carbohydrate degradation; glycolysis; pyruvate from D-glyceraldehyde 3-phosphate: step 3/5. Functionally, catalyzes the interconversion of 2-phosphoglycerate and 3-phosphoglycerate. The chain is 2,3-bisphosphoglycerate-dependent phosphoglycerate mutase from Burkholderia cenocepacia (strain ATCC BAA-245 / DSM 16553 / LMG 16656 / NCTC 13227 / J2315 / CF5610) (Burkholderia cepacia (strain J2315)).